Consider the following 96-residue polypeptide: Large ribosomal subunit protein uL18m (96 aa).

It belongs to the universal ribosomal protein uL18 family.

It localises to the mitochondrion. This is Large ribosomal subunit protein uL18m (RPL18) from Reclinomonas americana.